We begin with the raw amino-acid sequence, 428 residues long: Histidine--tRNA ligase (428 aa).

This sequence belongs to the class-II aminoacyl-tRNA synthetase family. Homodimer.

The protein resides in the cytoplasm. The enzyme catalyses tRNA(His) + L-histidine + ATP = L-histidyl-tRNA(His) + AMP + diphosphate + H(+). The protein is Histidine--tRNA ligase of Staphylococcus carnosus (strain TM300).